Here is a 234-residue protein sequence, read N- to C-terminus: Cell fusion protein dni1 (234 aa).

Positions 1–32 (MLFLHSVVQGTGTLCTLAAWILLALVMTGCQS) are cleaved as a signal peptide. Residues 33–96 (STTSKFQLFS…RSKFLINEVH (64 aa)) lie on the Extracellular side of the membrane. The helical transmembrane segment at 97–117 (PWMIVFSFCVCGVSFLMGVVS) threads the bilayer. At 118–132 (SLPLIGRLEFLRNIR) the chain is on the cytoplasmic side. The helical transmembrane segment at 133 to 153 (ISLSFFSFFSILVTALFAHVA) threads the bilayer. Over 154 to 178 (VSSFVMAVGNGTQNRVTASLGKKAM) the chain is Extracellular. The helical transmembrane segment at 179 to 199 (IFLWCSMGLVTLTGITDSIIL) threads the bilayer. The Cytoplasmic segment spans residues 200 to 234 (LVTSRTKKIRKTILEKSKVLTPSSSFSSKSSTTKY).

The protein belongs to the SUR7 family.

The protein localises to the cell membrane. The protein resides in the cell tip. Its function is as follows. Cell membrane protein which plays a relevant role in coordinating membrane organization and cell wall remodeling during mating. This chain is Cell fusion protein dni1 (dni1), found in Schizosaccharomyces pombe (strain 972 / ATCC 24843) (Fission yeast).